The chain runs to 1389 residues: MNRNIRRVRREVDSYIPSNNVNVETEGYLIRRIPKKCKPKVTSTIAQRVSQLENEVAEINVALAEHVNELNSQEKRIDKLEKTVKKKKSNCSDDSECSECSECSERSCCSKCNSNKCCCNNTCGVFPNSVEAFSYYGPISGNCGPFPGGNCGPFPGGPCGPFAGGNCGPFSGGSCGPFPGGPCGPIPGGNCGPIPGGPCGPISGGPCGPISGGSCGPALPYSAAVDGYEYFQNGPMMSCPPIGPMGPNGFVEEQFVGGNGPFIGGGGFIGPNNGFVEESWGNCNDCRRGKCKKHKNRRSKSDNSDLSEYSSSNSDDSECTDSDGSSCSTDGSPDCTESENTESHRSHGKKKHRFVNKKRNTCNNSDNKDNSRINMNICDLLKLFGDKCPIKIDPNEECKQVPNEFIQIKCCQEQICCQNSCCANKNSCCTDNCCPKTKCCEKDDTNSYTIEWQKSPDCCKEIDYCEKPFSCETNYCGNSYETDYCPIYIKPDSINSNNYTNSSEKYQYNHYDSDNCSDNYSDNYSDNDSEKVYNINLDATNINTDPNYNHNFNNNHNFNNNFTNNRMTDYSTDYISHNFNPGNNQYSQQISHEQNINQQQSQNSENLLDNNEYGDYENYYNMLRGDQNIFPVNNSSNFNQYESTDISNNQNFNSQIVDSIIDTNHNKDSIQVEFSNNNDKTHHEKNECHCHEHSQPCKTTSIVPFGTPIVDCNNCRNEECITIIQTDSSCSSNKVPIIQPIEPETKTMSIIDTAIANIDTCTDLTLINQPKGISTDAAILWAAKIGNLNMNQGMKVTTDSNNNIIVAGFYRADVTPEPSNDDVPPTVIYDSKGCGVKNITASGIEEIFIVKYDMYGNFLWFAKIESTFTDFTVSIAVDTEDNVIVTGSFTDSAVNIYDSTSQLVKHIPQPIPEPSAEITQSFIVKYSPAGIYQWTAVLFTSGIAVIKSVTTDPNNNIYITGYYGGQTLTFQNSDGTDSYSLGANSLTNVFVAAYNYLGFVLWVTMCGNIGNTVSEQGYNEGLDIKYSPDQTIVVSGYYNTNPLIIYDGPDGLTPSGISLTNVNNTNINITGNDINTTPDIFLIKFRLNGTALWATKISGTITQFNTSVWASEFSGISNQFYTTIAIDPDANIIITGTYNQGPVQIFNTPSGTILSTINLIITGTISTYIIKYGPRGNAIWATRISGALSQVSNGIATDSDSNIIVSGYFSAPVTVFYSSDGTTPFTLENVSEISAFTVKYDRCGNALWAVKQENNGITQALNVAVDNNDSVVIVGTFNQAPINFYNSNKQMAKCIINDSSYDGYVAKYADFVQSLVLLPGCKQKDIAINESCYKRANTLVTYKAGTISNSVSNCLRGFLMTRANSSIKLLPNGNNWLVDYSNNILFIYP.

The stretch at 43–94 forms a coiled coil; it reads STIAQRVSQLENEVAEINVALAEHVNELNSQEKRIDKLEKTVKKKKSNCSDD. Positions 294-353 are disordered; that stretch reads HKNRRSKSDNSDLSEYSSSNSDDSECTDSDGSSCSTDGSPDCTESENTESHRSHGKKKHR. 2 stretches are compositionally biased toward low complexity: residues 304 to 314 and 322 to 335; these read SDLSEYSSSNS and SDGS…SPDC. WD repeat units lie at residues 867 to 907, 1017 to 1056, and 1115 to 1156; these read TFTD…VKHI, GYNE…TPSG, and GISN…ILST.

Its subcellular location is the virion. This is an uncharacterized protein from Acanthamoeba polyphaga (Amoeba).